We begin with the raw amino-acid sequence, 205 residues long: 3-demethoxyubiquinol 3-hydroxylase (205 aa).

Residues glutamate 54, glutamate 84, histidine 87, glutamate 136, glutamate 168, and histidine 171 each coordinate Fe cation.

This sequence belongs to the COQ7 family. It depends on Fe cation as a cofactor.

The protein localises to the cell membrane. It catalyses the reaction a 5-methoxy-2-methyl-3-(all-trans-polyprenyl)benzene-1,4-diol + AH2 + O2 = a 3-demethylubiquinol + A + H2O. Its pathway is cofactor biosynthesis; ubiquinone biosynthesis. Catalyzes the hydroxylation of 2-nonaprenyl-3-methyl-6-methoxy-1,4-benzoquinol during ubiquinone biosynthesis. In Delftia acidovorans (strain DSM 14801 / SPH-1), this protein is 3-demethoxyubiquinol 3-hydroxylase.